A 675-amino-acid polypeptide reads, in one-letter code: PTS system glucose-specific EIICBA component (675 aa).

The PTS EIIC type-1 domain occupies 3–414 (KKLFGQMQRI…FNYKTPGRED (412 aa)). 11 helical membrane passes run 16–36 (LMLP…GTAF), 59–79 (MLTG…ALGV), 81–101 (IGLA…FIIL), 126–146 (VLGI…GALA), 170–190 (FVPI…AIIW), 211–231 (LAVF…LHHI), 273–293 (FMQG…LAIY), 303–323 (VVAG…ITEP), 328–348 (FLFV…LSFL), 355–375 (VHLG…GILP), and 378–398 (TAWW…YFVF). Positions 425-506 (SQLPFDVLKA…AKIISGEITK (82 aa)) constitute a PTS EIIB type-1 domain. The active-site Phosphocysteine intermediate; for EIIB activity is Cys-447. The region spanning 547-651 (DKVFSEKMMG…SIITPVIITN (105 aa)) is the PTS EIIA type-1 domain. Catalysis depends on His-599, which acts as the Tele-phosphohistidine intermediate; for EIIA activity.

The protein localises to the cell membrane. It catalyses the reaction N(pros)-phospho-L-histidyl-[protein] + D-glucose(out) = D-glucose 6-phosphate(in) + L-histidyl-[protein]. The phosphoenolpyruvate-dependent sugar phosphotransferase system (sugar PTS), a major carbohydrate active transport system, catalyzes the phosphorylation of incoming sugar substrates concomitantly with their translocation across the cell membrane. This system is involved in glucose transport. This is PTS system glucose-specific EIICBA component (ptsG) from Staphylococcus epidermidis.